We begin with the raw amino-acid sequence, 305 residues long: UDP-N-acetylenolpyruvoylglucosamine reductase (305 aa).

The FAD-binding PCMH-type domain maps to 33–198; it reads RVGGPAQVLF…TGGTFRGRRA (166 aa). The active site involves Arg-178. The active-site Proton donor is Ser-227. Glu-297 is an active-site residue.

The protein belongs to the MurB family. Requires FAD as cofactor.

It localises to the cytoplasm. The catalysed reaction is UDP-N-acetyl-alpha-D-muramate + NADP(+) = UDP-N-acetyl-3-O-(1-carboxyvinyl)-alpha-D-glucosamine + NADPH + H(+). It participates in cell wall biogenesis; peptidoglycan biosynthesis. Its function is as follows. Cell wall formation. In Nitrobacter hamburgensis (strain DSM 10229 / NCIMB 13809 / X14), this protein is UDP-N-acetylenolpyruvoylglucosamine reductase.